The chain runs to 379 residues: Orotidine 5'-phosphate decarboxylase (379 aa).

Residues Asp-42, 64-66, and 99-108 each bind substrate; these read KTH and DRKFGDIGHT. Residue Lys-101 is the Proton donor of the active site. The tract at residues 165-198 is disordered; that stretch reads PTMDQFDDAEDAKDDEPATVNDNGSNMMEKPIYA. Over residues 169–178 the composition is skewed to acidic residues; that stretch reads QFDDAEDAKD. Positions 331 and 350 each coordinate substrate.

It belongs to the OMP decarboxylase family.

The catalysed reaction is orotidine 5'-phosphate + H(+) = UMP + CO2. It participates in pyrimidine metabolism; UMP biosynthesis via de novo pathway; UMP from orotate: step 2/2. This Hypocrea atroviridis (Trichoderma atroviride) protein is Orotidine 5'-phosphate decarboxylase (pyr4).